Here is a 393-residue protein sequence, read N- to C-terminus: S-adenosylmethionine synthase 2 (393 aa).

Glu-9 provides a ligand contact to Mg(2+). His-15 contacts ATP. Residue Glu-43 coordinates K(+). Positions 56 and 99 each coordinate L-methionine. Residues 167 to 169 (DGK), 235 to 238 (SGRF), Asp-246, 252 to 253 (RK), Ala-269, Lys-273, and Lys-277 each bind ATP. Asp-246 serves as a coordination point for L-methionine. Lys-277 contributes to the L-methionine binding site.

It belongs to the AdoMet synthase family. As to quaternary structure, homotetramer. Mn(2+) serves as cofactor. The cofactor is Mg(2+). Co(2+) is required as a cofactor. It depends on K(+) as a cofactor. Requires NH4(+) as cofactor. Mostly expressed in roots, and, to a lower extent, in hypocotyls and cotyledons.

The protein localises to the cytoplasm. The catalysed reaction is L-methionine + ATP + H2O = S-adenosyl-L-methionine + phosphate + diphosphate. The protein operates within amino-acid biosynthesis; S-adenosyl-L-methionine biosynthesis; S-adenosyl-L-methionine from L-methionine: step 1/1. Inhibited by products of SAMS reaction (SAM, Pi, PPi), substrate analogs (cycloleucine and ethionine), and alternative nucleotides (GTP, CTP and ADP). Strongly repressed by PPPi. Functionally, catalyzes the formation of S-adenosylmethionine from methionine and ATP. The reaction comprises two steps that are both catalyzed by the same enzyme: formation of S-adenosylmethionine (AdoMet) and triphosphate, and subsequent hydrolysis of the triphosphate. In Catharanthus roseus (Madagascar periwinkle), this protein is S-adenosylmethionine synthase 2 (SAMS2).